A 303-amino-acid polypeptide reads, in one-letter code: MASSSNYNTYMQYLNPPPYADHGANQLIPADQLSNQQGITPNYVGDLNLDDQFKGNVCHAFTLEAIIDISAYNERTVKGVPAWLPLGIMSNFEYPLAHTVAALLTGSYTITQFTHNGQKFVRVNRLGTGIPAHPLRMLREGNQAFIQNMVIPRNFSTNQFTYNLTNLVLSVQKLPDDAWRPSKDKLIGNTMHPAVSVHPNLPPIVLPTVKKQAYRQHKNPNNGPLLAISGILHQLRVEKVPEKTSLFRISLPADMFSVKEGMMKKRGENSPVVYFQAPENFPLNGFNNRQVVLAYANPTLSAV.

The PPXY motif motif lies at 16-19 (PPPY).

It belongs to the filoviridae matrix protein VP40 family. Exists as a dimer until it reorganizes at the plasma membrane into multimeric form. Interacts with host TSG101. Interacts (via PPXY motif) with SMURF2 (via WW domains); the interaction positively regulates virus budding.

The protein resides in the virion membrane. It localises to the host late endosome membrane. Its subcellular location is the host cell membrane. The protein localises to the host endomembrane system. Functionally, plays an essential role virus particle assembly and budding. Promotes virus assembly and budding by interacting with host proteins of the multivesicular body pathway. The interaction with host E3 ubiquitin ligase SMURF2 facilitates virus budding. The interaction with the nucleocapsid and the plasma membrane may also facilitate virus budding. Specific interactions with membrane-associated GP and VP24 during the budding process may also occur. May play a role in genome replication. The chain is Matrix protein VP40 (VP40) from Chlorocebus aethiops (Green monkey).